We begin with the raw amino-acid sequence, 193 residues long: Ribosomal RNA small subunit methyltransferase G (193 aa).

S-adenosyl-L-methionine is bound by residues Gly-62, Phe-67, 111 to 112, and Arg-125; that span reads IE.

The protein belongs to the methyltransferase superfamily. RNA methyltransferase RsmG family.

The protein resides in the cytoplasm. The enzyme catalyses guanosine(527) in 16S rRNA + S-adenosyl-L-methionine = N(7)-methylguanosine(527) in 16S rRNA + S-adenosyl-L-homocysteine. Functionally, specifically methylates the N7 position of guanine in position 527 of 16S rRNA. The sequence is that of Ribosomal RNA small subunit methyltransferase G from Gluconobacter oxydans (strain 621H) (Gluconobacter suboxydans).